Consider the following 955-residue polypeptide: Kinesin-like protein NACK2 (955 aa).

The region spanning 36–357 is the Kinesin motor domain; that stretch reads KILVTIRVRP…LCFATSAKEV (322 aa). Position 120–127 (120–127) interacts with ATP; sequence GQTSSGKT. 2 coiled-coil regions span residues 366 to 443 and 566 to 604; these read VVAE…LKGS and KASL…VMHL.

Belongs to the TRAFAC class myosin-kinesin ATPase superfamily. Kinesin family. KIN-7 subfamily.

It is found in the cytoplasm. Its subcellular location is the nucleus. The protein resides in the cytoskeleton. It localises to the phragmoplast. Probable plus end-directed motor protein that may function in the NACK-PQR (NPK1-NQK1/MEK1-NRK1) MAP kinase signaling pathway, which is essential for somatic cell cytokinesis, especially for the cell-plate formation and its expansion. May regulate the activity and the localization of NPK1, probably by association through the non-catalytic region of the kinase. This Nicotiana tabacum (Common tobacco) protein is Kinesin-like protein NACK2 (NACK2).